The primary structure comprises 303 residues: Probable porphobilinogen deaminase (303 aa).

Cys240 is subject to S-(dipyrrolylmethanemethyl)cysteine.

It belongs to the HMBS family. Dipyrromethane is required as a cofactor.

The catalysed reaction is 4 porphobilinogen + H2O = hydroxymethylbilane + 4 NH4(+). Its pathway is porphyrin-containing compound metabolism; protoporphyrin-IX biosynthesis; coproporphyrinogen-III from 5-aminolevulinate: step 2/4. Functionally, tetrapolymerization of the monopyrrole PBG into the hydroxymethylbilane pre-uroporphyrinogen in several discrete steps. This Hyperthermus butylicus (strain DSM 5456 / JCM 9403 / PLM1-5) protein is Probable porphobilinogen deaminase.